The following is a 42-amino-acid chain: Photosystem I reaction center subunit IX (42 aa).

The helical transmembrane segment at 7-27 (YLSTAPVLATIWFIILAGLLI) threads the bilayer.

This sequence belongs to the PsaJ family.

The protein localises to the plastid. It is found in the chloroplast thylakoid membrane. In terms of biological role, may help in the organization of the PsaE and PsaF subunits. This is Photosystem I reaction center subunit IX from Mesostigma viride (Green alga).